Here is a 1614-residue protein sequence, read N- to C-terminus: Adenylate cyclase type 10 (1614 aa).

2 consecutive Guanylate cyclase domains span residues 42-179 and 293-418; these read VLMF…RLAQ and TIVF…ARMM. Mg(2+)-binding residues include aspartate 47 and isoleucine 48. 47-52 serves as a coordination point for ATP; it reads DISGFT. Lysine 95 is a binding site for hydrogencarbonate. Residue aspartate 99 participates in Mg(2+) binding. Aspartate 99 and lysine 144 together coordinate ATP. Residues valine 167, arginine 176, and methionine 337 each coordinate hydrogencarbonate. ATP-binding positions include valine 406 and 412–416; that span reads NIAAR.

This sequence belongs to the adenylyl cyclase class-4/guanylyl cyclase family. The cofactor is Mg(2+). Mn(2+) is required as a cofactor. Expressed in testis.

The protein resides in the cell membrane. It localises to the cytoplasm. It is found in the cytoskeleton. Its subcellular location is the perinuclear region. The protein localises to the nucleus. The protein resides in the cell projection. It localises to the cilium. It is found in the mitochondrion. It carries out the reaction ATP = 3',5'-cyclic AMP + diphosphate. Its activity is regulated as follows. Activated by manganese or magnesium ions. In the presence of magnesium ions, the enzyme is activated by bicarbonate. Calcium mildly increases the enzyme activity, also in the presence of magnesium ions. Catalyzes the formation of the signaling molecule cAMP. May function as sensor that mediates responses to changes in cellular bicarbonate and CO(2) levels. Has a critical role in mammalian spermatogenesis by producing the cAMP which regulates cAMP-responsive nuclear factors indispensable for sperm maturation in the epididymis. Induces capacitation, the maturational process that sperm undergo prior to fertilization. Involved in ciliary beat regulation. In Mus musculus (Mouse), this protein is Adenylate cyclase type 10 (Adcy10).